The chain runs to 88 residues: Acyl-CoA-binding domain-containing protein 7 (88 aa).

The ACB domain maps to leucine 3 to isoleucine 88. Residues arginine 15, tyrosine 30–lysine 34, lysine 56, and tyrosine 75 contribute to the an acyl-CoA site.

It belongs to the ACBD7 family.

Functionally, binds medium- and long-chain acyl-CoA esters. The polypeptide is Acyl-CoA-binding domain-containing protein 7 (ACBD7) (Homo sapiens (Human)).